Reading from the N-terminus, the 234-residue chain is Ubiquitin thioesterase OTUB2 (234 aa).

In terms of domain architecture, OTU spans 40 to 231 (TAIRKTKGDG…TSHYNILYAA (192 aa)). Asp48 is a catalytic residue. The Nucleophile role is filled by Cys51. His224 is an active-site residue.

Belongs to the peptidase C65 family. As to expression, widely expressed. Expressed at higher level in brain.

The catalysed reaction is Thiol-dependent hydrolysis of ester, thioester, amide, peptide and isopeptide bonds formed by the C-terminal Gly of ubiquitin (a 76-residue protein attached to proteins as an intracellular targeting signal).. Functionally, hydrolase that can remove conjugated ubiquitin from proteins in vitro and may therefore play an important regulatory role at the level of protein turnover by preventing degradation. Mediates deubiquitination of 'Lys-11'-,'Lys-48'- and 'Lys-63'-linked polyubiquitin chains, with a preference for 'Lys-63'-linked polyubiquitin chains. In Homo sapiens (Human), this protein is Ubiquitin thioesterase OTUB2 (OTUB2).